An 86-amino-acid chain; its full sequence is Antitoxin VapB33 (86 aa).

Antitoxin component of a type II toxin-antitoxin (TA) system. Upon expression in M.smegmatis neutralizes the effect of cognate toxin VapC33. The sequence is that of Antitoxin VapB33 (vapB33) from Mycobacterium tuberculosis (strain ATCC 25618 / H37Rv).